We begin with the raw amino-acid sequence, 663 residues long: MIDRRDENTFKLVSKYQPSGDQPQAIEQLVDNIEGGEKAQILLGATGTGKTYTMSQVISKVNKPTLVIAHNKTLAGQLYGEFKEFFPENAVEYFVSYYDYYQPEAYVPSSDTYIEKDSSVNDEIDKLRHSATSSLLERNDVIVVASVSCIYGLGSPKEYADSAVSLRPGQEISRDQLLNQLVDIQFERNDFDFQRGRFRVRGDVVEVFPASRDEHAFRIEFFGDEIDRIREIESLTGKILGEAEHLVLFPATHFVTNDEHMEASIAKIQAELASQLKVFESEGKLLEAQRLKQRTEYDIEMLREMGYTNGVENYSRHMDGRSEGEPPYTLLDFFPEDFLIMIDESHMTMGQIKGMYNGDQARKKMLVDYGFRLPSALDNRPLRREEFESHVHQIVYVSATPGDYELEQTDTIVEQIIRPTGLLDPIVEVRPTMGQMDDLLGEINLRTERGERTFITTLTKKMAEDLTDYLKEMGVKVKYMHSDIKTLERTEIIRDLRLGVFDVLIGINLLREGIDVPEVSLVAILDADKEGFLRNERGLIQTIGRAARNSQGRVIMYADKMTESMQKAIDETARRRQIQMAYNEEHGIVPQTIKKEIRDLISITKGTNTEVEEESLDYSVMTKSERQEAIKKLQKQMHEAAELLDFELAAQIRDMVLELKSMD.

The Helicase ATP-binding domain maps to 31-271; it reads DNIEGGEKAQ…EASIAKIQAE (241 aa). Position 44 to 51 (44 to 51) interacts with ATP; that stretch reads GATGTGKT. A Beta-hairpin motif is present at residues 97 to 120; it reads YYDYYQPEAYVPSSDTYIEKDSSV. In terms of domain architecture, Helicase C-terminal spans 435 to 601; the sequence is QMDDLLGEIN…TIKKEIRDLI (167 aa). Residues 627-662 form the UVR domain; it reads QEAIKKLQKQMHEAAELLDFELAAQIRDMVLELKSM.

Belongs to the UvrB family. Forms a heterotetramer with UvrA during the search for lesions. Interacts with UvrC in an incision complex.

It localises to the cytoplasm. In terms of biological role, the UvrABC repair system catalyzes the recognition and processing of DNA lesions. A damage recognition complex composed of 2 UvrA and 2 UvrB subunits scans DNA for abnormalities. Upon binding of the UvrA(2)B(2) complex to a putative damaged site, the DNA wraps around one UvrB monomer. DNA wrap is dependent on ATP binding by UvrB and probably causes local melting of the DNA helix, facilitating insertion of UvrB beta-hairpin between the DNA strands. Then UvrB probes one DNA strand for the presence of a lesion. If a lesion is found the UvrA subunits dissociate and the UvrB-DNA preincision complex is formed. This complex is subsequently bound by UvrC and the second UvrB is released. If no lesion is found, the DNA wraps around the other UvrB subunit that will check the other stand for damage. This chain is UvrABC system protein B, found in Streptococcus uberis (strain ATCC BAA-854 / 0140J).